Reading from the N-terminus, the 113-residue chain is Biotrophy-associated secreted protein 3 (113 aa).

An N-terminal signal peptide occupies residues 1-20 (MQFSTVSFAIFAILPAMVAA).

It is found in the secreted. Its function is as follows. Secreted effector involved in biotrophic colonization of plant cells. This is Biotrophy-associated secreted protein 3 from Pyricularia oryzae (strain 70-15 / ATCC MYA-4617 / FGSC 8958) (Rice blast fungus).